The following is a 297-amino-acid chain: Calponin-1 (297 aa).

The region spanning 28-131 is the Calponin-homology (CH) domain; the sequence is HQREQELREW…STLLALASMA (104 aa). 3 Calponin-like repeats span residues 164 to 189, 204 to 229, and 243 to 268; these read IGLQMGTNKFASQQGMTAYGTRRHLY, ISLQMGTNKGASQAGMTAPGTKRQIF, and VSLQMGSNKGASQRGMTVYGLPRQVY. Residue Thr170 is modified to Phosphothreonine; by ROCK2. Ser175 is subject to Phosphoserine; by ROCK2. Phosphothreonine; by ROCK2 occurs at positions 180 and 184. Thr259 carries the phosphothreonine; by ROCK2 modification.

It belongs to the calponin family. In terms of assembly, part of cGMP kinase signaling complex at least composed of ACTA2/alpha-actin, CNN1/calponin H1, PLN/phospholamban, PRKG1 and ITPR1. As to expression, smooth muscle, and tissues containing significant amounts of smooth muscle.

Functionally, thin filament-associated protein that is implicated in the regulation and modulation of smooth muscle contraction. It is capable of binding to actin, calmodulin and tropomyosin. The interaction of calponin with actin inhibits the actomyosin Mg-ATPase activity. In Mus musculus (Mouse), this protein is Calponin-1 (Cnn1).